Consider the following 418-residue polypeptide: Actin-related protein 3B (418 aa).

The protein belongs to the actin family. ARP3 subfamily. In terms of assembly, interacts with the Arp2/3 complex composed of ARP2, ARP3, ARPC1B, ARPC1B/p41-ARC, ARPC2/p34-ARC, ARPC3/p21-ARC, ARPC4/p20-ARC and ARPC5/p16-ARC. In terms of tissue distribution, detected in fetal brain. Detected throughout the adult brain, in neurons from gray matter, but not in white matter. Detected in liver, skeletal muscle and pancreas. Detected in lung adenocarcinoma cells with low metastatic potential, but not in lung adenocarcinoma cells with high metastatic potential.

It localises to the cytoplasm. The protein resides in the cytoskeleton. Its subcellular location is the cell projection. Plays a role in the organization of the actin cytoskeleton. May function as ATP-binding component of the Arp2/3 complex which is involved in regulation of actin polymerization and together with an activating nucleation-promoting factor (NPF) mediates the formation of branched actin networks. May decrease the metastatic potential of tumors. This is Actin-related protein 3B (ACTR3B) from Homo sapiens (Human).